Consider the following 90-residue polypeptide: MVRSVKCIRLGCEAEGLDFPPYPGELGKRIFDNVSKEAWSQWIKHQTMLVNEMRLNLADIKARKYLASQMEAYFFGEGADQPAGYIPPDK.

It belongs to the Fe(2+)-trafficking protein family.

In terms of biological role, could be a mediator in iron transactions between iron acquisition and iron-requiring processes, such as synthesis and/or repair of Fe-S clusters in biosynthetic enzymes. The sequence is that of Probable Fe(2+)-trafficking protein from Nitrosomonas europaea (strain ATCC 19718 / CIP 103999 / KCTC 2705 / NBRC 14298).